Consider the following 106-residue polypeptide: ATP-dependent Clp protease adapter protein ClpS (106 aa).

Belongs to the ClpS family. As to quaternary structure, binds to the N-terminal domain of the chaperone ClpA.

Its function is as follows. Involved in the modulation of the specificity of the ClpAP-mediated ATP-dependent protein degradation. The protein is ATP-dependent Clp protease adapter protein ClpS of Pseudoalteromonas atlantica (strain T6c / ATCC BAA-1087).